An 860-amino-acid chain; its full sequence is Leucine--tRNA ligase (860 aa).

The short motif at 42-52 (PYPSGRLHMGH) is the 'HIGH' region element. Positions 619 to 623 (KMSKS) match the 'KMSKS' region motif. K622 contributes to the ATP binding site.

Belongs to the class-I aminoacyl-tRNA synthetase family.

The protein localises to the cytoplasm. It carries out the reaction tRNA(Leu) + L-leucine + ATP = L-leucyl-tRNA(Leu) + AMP + diphosphate. This chain is Leucine--tRNA ligase, found in Yersinia enterocolitica serotype O:8 / biotype 1B (strain NCTC 13174 / 8081).